A 152-amino-acid polypeptide reads, in one-letter code: Large ribosomal subunit protein bL34c (152 aa).

The N-terminal 91 residues, 1–91 (MATLSLLSTG…DRCRRFVVRA (91 aa)), are a transit peptide targeting the chloroplast.

As to quaternary structure, component of the chloroplast large ribosomal subunit (LSU). Mature 70S chloroplast ribosomes of higher plants consist of a small (30S) and a large (50S) subunit. The 30S small subunit contains 1 molecule of ribosomal RNA (16S rRNA) and 24 different proteins. The 50S large subunit contains 3 rRNA molecules (23S, 5S and 4.5S rRNA) and 33 different proteins.

It localises to the plastid. Its subcellular location is the chloroplast. In terms of biological role, component of the chloroplast ribosome (chloro-ribosome), a dedicated translation machinery responsible for the synthesis of chloroplast genome-encoded proteins, including proteins of the transcription and translation machinery and components of the photosynthetic apparatus. The protein is Large ribosomal subunit protein bL34c (RPL34) of Spinacia oleracea (Spinach).